The sequence spans 233 residues: Mediator of RNA polymerase II transcription subunit 7 (233 aa).

K185 is covalently cross-linked (Glycyl lysine isopeptide (Lys-Gly) (interchain with G-Cter in SUMO1); alternate). Residue K185 forms a Glycyl lysine isopeptide (Lys-Gly) (interchain with G-Cter in SUMO2); alternate linkage. The tract at residues 187-213 is disordered; it reads EPMDADDSNNCTGQNEHQRENSGHRRD. The residue at position 194 (S194) is a Phosphoserine. A compositionally biased stretch (basic and acidic residues) spans 202–213; sequence EHQRENSGHRRD.

It belongs to the Mediator complex subunit 7 family. As to quaternary structure, component of the Mediator complex, which is composed of MED1, MED4, MED6, MED7, MED8, MED9, MED10, MED11, MED12, MED13, MED13L, MED14, MED15, MED16, MED17, MED18, MED19, MED20, MED21, MED22, MED23, MED24, MED25, MED26, MED27, MED29, MED30, MED31, CCNC, CDK8 and CDC2L6/CDK11. The MED12, MED13, CCNC and CDK8 subunits form a distinct module termed the CDK8 module. Mediator containing the CDK8 module is less active than Mediator lacking this module in supporting transcriptional activation. Individual preparations of the Mediator complex lacking one or more distinct subunits have been variously termed ARC, CRSP, DRIP, PC2, SMCC and TRAP. Post-translationally, constitutively sumoylated.

It is found in the nucleus. Functionally, component of the Mediator complex, a coactivator involved in the regulated transcription of nearly all RNA polymerase II-dependent genes. Mediator functions as a bridge to convey information from gene-specific regulatory proteins to the basal RNA polymerase II transcription machinery. Mediator is recruited to promoters by direct interactions with regulatory proteins and serves as a scaffold for the assembly of a functional preinitiation complex with RNA polymerase II and the general transcription factors. In Homo sapiens (Human), this protein is Mediator of RNA polymerase II transcription subunit 7 (MED7).